The following is a 127-amino-acid chain: Large ribosomal subunit protein bL17 (127 aa).

The protein belongs to the bacterial ribosomal protein bL17 family. In terms of assembly, part of the 50S ribosomal subunit. Contacts protein L32.

This is Large ribosomal subunit protein bL17 from Photobacterium profundum (strain SS9).